The following is a 284-amino-acid chain: RNase adapter protein RapZ (284 aa).

8–15 lines the ATP pocket; that stretch reads GRSGSGKS. Position 56 to 59 (56 to 59) interacts with GTP; sequence DVRN. The interval 266–284 is RNA-binding; that stretch reads RSRGKNVQSRHRTLEKRKT.

Belongs to the RapZ-like family. RapZ subfamily. Homotrimer.

Its function is as follows. Modulates the synthesis of GlmS, by affecting the processing and stability of the regulatory small RNA GlmZ. When glucosamine-6-phosphate (GlcN6P) concentrations are high in the cell, RapZ binds GlmZ and targets it to cleavage by RNase E. Consequently, GlmZ is inactivated and unable to activate GlmS synthesis. Under low GlcN6P concentrations, RapZ is sequestered and inactivated by an other regulatory small RNA, GlmY, preventing GlmZ degradation and leading to synthesis of GlmS. The polypeptide is RNase adapter protein RapZ (Salmonella typhimurium (strain LT2 / SGSC1412 / ATCC 700720)).